The sequence spans 318 residues: Magnetosome protein MamM (318 aa).

The tract at residues 1-210 (MRKSGCAVCS…FMDAYRGLMD (210 aa)) is transmembrane domain (TMD). 4 helical membrane passes run 13 to 33 (IGWVGLAVSTVLMVMKAFVGL), 39 to 59 (AMLADAMYSLKDMLNALMVII), 81 to 101 (FILSMVVSVVFIVLTGYLLVH), and 117 to 137 (LIVLWAALVSIGVNVGMYFYS). The segment at 211–318 (HTAGEAVQNR…DEVMLSKVDN (108 aa)) is C-terminal domain (CTD). Residues Asp-249, His-264, His-285, and Glu-289 each coordinate Fe cation.

Belongs to the cation diffusion facilitator (CDF) transporter (TC 2.A.4) family. Forms homodimers via its C-terminal domain (CTD) in the presence of metal cations. Interacts with MamB via their CTD. Isolated CTD forms homodimers.

Its subcellular location is the magnetosome membrane. The protein resides in the cell inner membrane. Functionally, essential for magnetosome formation; required for stable accumulation of MamB. May nucleate iron crystal formation. Probably binds and transports iron. Binds divalent cations, possibly up to 3 Zn(2+) per dimer in vitro, probably iron in vivo. One of 7 genes (mamLQBIEMO) able to induce magnetosome membrane biogenesis; coexpression of mamLQRBIEMO in a deletion of the 17 gene mamAB operon restores magnetosome vesicle formation but not magnetite biosynthesis. This Magnetospirillum gryphiswaldense (strain DSM 6361 / JCM 21280 / NBRC 15271 / MSR-1) protein is Magnetosome protein MamM.